A 592-amino-acid polypeptide reads, in one-letter code: Aspartate--tRNA(Asp/Asn) ligase (592 aa).

Glu182 is an L-aspartate binding site. The segment at 206–209 is aspartate; it reads QIFK. Arg228 contributes to the L-aspartate binding site. ATP contacts are provided by residues 228 to 230 and Gln237; that span reads RDE. His455 contributes to the L-aspartate binding site. Glu489 is a binding site for ATP. Position 496 (Arg496) interacts with L-aspartate. Residue 541–544 participates in ATP binding; the sequence is GLDR.

Belongs to the class-II aminoacyl-tRNA synthetase family. Type 1 subfamily. Homodimer.

Its subcellular location is the cytoplasm. It catalyses the reaction tRNA(Asx) + L-aspartate + ATP = L-aspartyl-tRNA(Asx) + AMP + diphosphate. Functionally, aspartyl-tRNA synthetase with relaxed tRNA specificity since it is able to aspartylate not only its cognate tRNA(Asp) but also tRNA(Asn). Reaction proceeds in two steps: L-aspartate is first activated by ATP to form Asp-AMP and then transferred to the acceptor end of tRNA(Asp/Asn). This chain is Aspartate--tRNA(Asp/Asn) ligase, found in Thermoanaerobacter sp. (strain X514).